The following is a 357-amino-acid chain: Histidinol-phosphate aminotransferase (357 aa).

Lys-222 is subject to N6-(pyridoxal phosphate)lysine.

The protein belongs to the class-II pyridoxal-phosphate-dependent aminotransferase family. Histidinol-phosphate aminotransferase subfamily. As to quaternary structure, homodimer. Pyridoxal 5'-phosphate is required as a cofactor.

The catalysed reaction is L-histidinol phosphate + 2-oxoglutarate = 3-(imidazol-4-yl)-2-oxopropyl phosphate + L-glutamate. It functions in the pathway amino-acid biosynthesis; L-histidine biosynthesis; L-histidine from 5-phospho-alpha-D-ribose 1-diphosphate: step 7/9. The sequence is that of Histidinol-phosphate aminotransferase from Leuconostoc mesenteroides subsp. mesenteroides (strain ATCC 8293 / DSM 20343 / BCRC 11652 / CCM 1803 / JCM 6124 / NCDO 523 / NBRC 100496 / NCIMB 8023 / NCTC 12954 / NRRL B-1118 / 37Y).